The following is a 513-amino-acid chain: Glutamate--tRNA ligase 2 (513 aa).

Residues 11–21 (PSPSGFLHIGS) carry the 'HIGH' region motif. The short motif at 240–244 (KLSKR) is the 'KMSKS' region element. Lys243 contacts ATP.

It belongs to the class-I aminoacyl-tRNA synthetase family. Glutamate--tRNA ligase type 1 subfamily. Monomer.

Its subcellular location is the cytoplasm. It catalyses the reaction tRNA(Glu) + L-glutamate + ATP = L-glutamyl-tRNA(Glu) + AMP + diphosphate. Catalyzes the attachment of glutamate to tRNA(Glu) in a two-step reaction: glutamate is first activated by ATP to form Glu-AMP and then transferred to the acceptor end of tRNA(Glu). This chain is Glutamate--tRNA ligase 2, found in Rickettsia massiliae (strain Mtu5).